The following is a 513-amino-acid chain: Sugar transport protein MST8 (513 aa).

Residues 1 to 17 lie on the Cytoplasmic side of the membrane; it reads MAGGAMTDTDGAHKNYP. The helical transmembrane segment at 18-38 threads the bilayer; that stretch reads GKMTIFVFLACLVASSGGLIF. Over 39–81 the chain is Extracellular; the sequence is GYDIGISGGVTSMDSFLIKFFPSVYAKEKEMVETNQYCKFDSE. A helical transmembrane segment spans residues 82–102; it reads LLTLFTSSLYLAALIASLFAS. The Cytoplasmic segment spans residues 103 to 116; that stretch reads VITRKFGRRITMLG. Residues 117–137 traverse the membrane as a helical segment; that stretch reads GGVIFLVGAILNGAAADVAML. Residues 138-139 lie on the Extracellular side of the membrane; it reads II. The helical transmembrane segment at 140–160 threads the bilayer; sequence GRILLGIGVGFSNQAVPLYLS. Residues 161–166 are Cytoplasmic-facing; that stretch reads EMAPAR. Residues 167-187 form a helical membrane-spanning segment; the sequence is MRGMLNISFQLMITVGILAAN. Topologically, residues 188–201 are extracellular; the sequence is LINYFTDKIAGGWG. A helical membrane pass occupies residues 202–222; the sequence is WRVSLGLAAVPAVIMAGGSLF. Residues 223 to 294 lie on the Cytoplasmic side of the membrane; the sequence is LPDTPNSLLS…LVMSVLIPTL (72 aa). A helical membrane pass occupies residues 295 to 315; that stretch reads QQLTGINVVMFYAPVLFKTIG. The Extracellular segment spans residues 316–320; the sequence is FGGTA. Residues 321-341 traverse the membrane as a helical segment; the sequence is SLMSAVITGLVNMFATFVSIA. The Cytoplasmic segment spans residues 342-347; that stretch reads TVDRLG. A helical membrane pass occupies residues 348–368; sequence RRKLLLQGGVQMIFAQFILGT. Residues 369 to 385 lie on the Extracellular side of the membrane; it reads LIAVKFGTAGVANISRG. Residues 386 to 406 form a helical membrane-spanning segment; sequence YAIVVVLCICVFVSAFAWSWG. The Cytoplasmic segment spans residues 407–425; it reads PLGWLVPSEIFPLEIRSAA. A helical transmembrane segment spans residues 426 to 446; the sequence is QSVVVVFNMAFTFIIAQIFLM. Residues 447-450 lie on the Extracellular side of the membrane; sequence MLCH. The chain crosses the membrane as a helical span at residues 451–471; it reads LKFGLFYFFGAMELIMTGFVF. Residues 472–512 are Cytoplasmic-facing; sequence FFLPETKGIPIEEMDRIWGKHWYWRRFVGAGAGGKVEITST.

This sequence belongs to the major facilitator superfamily. Sugar transporter (TC 2.A.1.1) family. As to expression, expressed specifically in anthers.

The protein localises to the membrane. In terms of biological role, mediates active uptake of hexoses by sugar:proton symport. May play an important role in transporting monosaccharides during anther development. The chain is Sugar transport protein MST8 from Oryza sativa subsp. japonica (Rice).